Reading from the N-terminus, the 191-residue chain is Calcium-activated potassium channel subunit beta-1 (191 aa).

The Cytoplasmic segment spans residues 1-18 (MGKKLVMAQKRGETRALC). The chain crosses the membrane as a helical span at residues 19–39 (LGVAMVVCAAITYYILGTTVL). The Extracellular portion of the chain corresponds to 40–155 (PLYQKSVWTQ…VVYQRLYGPQ (116 aa)). N-linked (GlcNAc...) asparagine glycosylation is found at Asn80 and Asn142. A helical transmembrane segment spans residues 156 to 176 (ILLFSFFWPTFLLTGGLLIIA). At 177–191 (MVKLNRSLSVLAAQK) the chain is on the cytoplasmic side.

It belongs to the KCNMB (TC 8.A.14.1) family. KCNMB1 subfamily. Interacts with KCNMA1 tetramer. There are probably 4 molecules of KCMNB1 per KCNMA1 tetramer. In terms of processing, N-glycosylated. Weakly expressed. In brain, it is expressed in a few discrete populations of neurons that also express KCNMA1.

The protein resides in the membrane. Functionally, regulatory subunit of the calcium activated potassium KCNMA1 (maxiK) channel. Modulates the calcium sensitivity and gating kinetics of KCNMA1, thereby contributing to KCNMA1 channel diversity. Increases the apparent Ca(2+)/voltage sensitivity of the KCNMA1 channel. It also modifies KCNMA1 channel kinetics and alters its pharmacological properties. It slows down the activation and the deactivation kinetics of the channel. Acts as a negative regulator of smooth muscle contraction by enhancing the calcium sensitivity to KCNMA1. Its presence is also a requirement for internal binding of the KCNMA1 channel opener dehydrosoyasaponin I (DHS-1) triterpene glycoside and for external binding of the agonist hormone 17-beta-estradiol (E2). Increases the binding activity of charybdotoxin (CTX) toxin to KCNMA1 peptide blocker by increasing the CTX association rate and decreasing the dissociation rate. The polypeptide is Calcium-activated potassium channel subunit beta-1 (Kcnmb1) (Rattus norvegicus (Rat)).